Consider the following 468-residue polypeptide: Phosphomethylpyrimidine synthase (468 aa).

Residues Asn-82, Met-111, Tyr-141, His-177, 197–199 (SRG), 238–241 (DSLR), and Glu-277 each bind substrate. His-281 is a binding site for Zn(2+). Residue Tyr-304 coordinates substrate. His-345 is a Zn(2+) binding site. Residues Cys-425, Cys-428, and Cys-433 each coordinate [4Fe-4S] cluster.

The protein belongs to the ThiC family. [4Fe-4S] cluster serves as cofactor.

It catalyses the reaction 5-amino-1-(5-phospho-beta-D-ribosyl)imidazole + S-adenosyl-L-methionine = 4-amino-2-methyl-5-(phosphooxymethyl)pyrimidine + CO + 5'-deoxyadenosine + formate + L-methionine + 3 H(+). Its pathway is cofactor biosynthesis; thiamine diphosphate biosynthesis. Catalyzes the synthesis of the hydroxymethylpyrimidine phosphate (HMP-P) moiety of thiamine from aminoimidazole ribotide (AIR) in a radical S-adenosyl-L-methionine (SAM)-dependent reaction. This Prochlorococcus marinus (strain SARG / CCMP1375 / SS120) protein is Phosphomethylpyrimidine synthase.